The primary structure comprises 62 residues: Large ribosomal subunit protein bL32m (62 aa).

It belongs to the bacterial ribosomal protein bL32 family.

It is found in the mitochondrion. This Reclinomonas americana protein is Large ribosomal subunit protein bL32m (RPL32).